Here is a 314-residue protein sequence, read N- to C-terminus: Splicing factor YJU2 (314 aa).

Zn(2+) is bound by residues Cys-43, Cys-46, Cys-80, and Cys-83. 2 disordered regions span residues 178–238 and 253–314; these read MSQE…NEVP and LAGL…DSDS. The span at 200 to 209 shows a compositional bias: basic and acidic residues; sequence EEARHRRLLE. Phosphoserine occurs at positions 211, 213, and 220. Over residues 222-232 the composition is skewed to low complexity; the sequence is PRAAARPNPTA. The segment covering 290-302 has biased composition (polar residues); sequence PTPQTPGTSSLSQ. Residues Ser-309, Ser-312, and Ser-314 each carry the phosphoserine modification.

The protein belongs to the CWC16 family. YJU2 subfamily. As to quaternary structure, component of the spliceosome. Present in the activated B complex, the catalytically activated B* complex which catalyzes the branching, the catalytic step 1 C complex catalyzing the exon ligation, and the postcatalytic P complex containing the ligated exons (mRNA) and the excised lariat intron.

It is found in the nucleus. Part of the spliceosome which catalyzes two sequential transesterification reactions, first the excision of the non-coding intron from pre-mRNA and then the ligation of the coding exons to form the mature mRNA. Plays a role in stabilizing the structure of the spliceosome catalytic core and docking of the branch helix into the active site, producing 5'-exon and lariat intron-3'-intermediates. May protect cells from TP53-dependent apoptosis upon dsDNA break damage through association with PRP19-CD5L complex. The chain is Splicing factor YJU2 from Mus musculus (Mouse).